We begin with the raw amino-acid sequence, 583 residues long: MSNSNFSIEEHFPDMWDAIMHDWLADSSSANPDPDLPVISPKQRSLLRKVTPVGLMGRIVVLETPNKWTKESIEKDLIDPIKHVLKTRLDLSVSLAITSTNGESENRAEAADDSHTRVDAVGDTHEGASQKGSVATADDLSMSQVEELVNKAEQRDGASQAGVSSAAETAEEAARRREHDADELAGQYSATENHIDPNPSPTPTRWTNKETAHRPAPRHTSPHTPSPQPSSSFNDGLDGESLLNKNYTFENFVVGSSNNFAAAACRAVAEAPAKAYNPLFIWGESGLGKTHLLHAIGHYAKELQPNMRVKYVSSEELTNDFINSIANDTRESFKRRYRNLDMLIVDDIQFLQNKESTQEEFFHTFNALHQANKQIVLSSDRPPRQLTTLEDRLRTRFEGGLITDVQTPDLETRIAILTKKAESDNVQLPEDVKVLIASRYEKSIRELDGALIRVTAYCALSHEPLTVETAEIALRDISPADQDVEIVPQHVIEVVANYFNLTTDELVGKGRAKKFVQARQIAMYLCRELTDLSLPKLGSAFGGRDHTTVMYAERRVRESLSENKKVFDQVQELTQKIKSHARD.

The interval 1–91 (MSNSNFSIEE…KHVLKTRLDL (91 aa)) is domain I, interacts with DnaA modulators. Positions 91–241 (LSVSLAITST…SFNDGLDGES (151 aa)) are domain II. The tract at residues 151–239 (KAEQRDGASQ…SSSFNDGLDG (89 aa)) is disordered. Residues 172-182 (EAARRREHDAD) are compositionally biased toward basic and acidic residues. The tract at residues 242-458 (LLNKNYTFEN…GALIRVTAYC (217 aa)) is domain III, AAA+ region. Positions 286, 288, 289, and 290 each coordinate ATP. The domain IV, binds dsDNA stretch occupies residues 459–583 (ALSHEPLTVE…TQKIKSHARD (125 aa)).

This sequence belongs to the DnaA family. In terms of assembly, oligomerizes as a right-handed, spiral filament on DNA at oriC.

It is found in the cytoplasm. In terms of biological role, plays an essential role in the initiation and regulation of chromosomal replication. ATP-DnaA binds to the origin of replication (oriC) to initiate formation of the DNA replication initiation complex once per cell cycle. Binds the DnaA box (a 9 base pair repeat at the origin) and separates the double-stranded (ds)DNA. Forms a right-handed helical filament on oriC DNA; dsDNA binds to the exterior of the filament while single-stranded (ss)DNA is stabiized in the filament's interior. The ATP-DnaA-oriC complex binds and stabilizes one strand of the AT-rich DNA unwinding element (DUE), permitting loading of DNA polymerase. After initiation quickly degrades to an ADP-DnaA complex that is not apt for DNA replication. Binds acidic phospholipids. This chain is Chromosomal replication initiator protein DnaA, found in Corynebacterium jeikeium (strain K411).